Consider the following 294-residue polypeptide: ATP phosphoribosyltransferase (294 aa).

Belongs to the ATP phosphoribosyltransferase family. Long subfamily. Mg(2+) is required as a cofactor.

It localises to the cytoplasm. It catalyses the reaction 1-(5-phospho-beta-D-ribosyl)-ATP + diphosphate = 5-phospho-alpha-D-ribose 1-diphosphate + ATP. The protein operates within amino-acid biosynthesis; L-histidine biosynthesis; L-histidine from 5-phospho-alpha-D-ribose 1-diphosphate: step 1/9. Its activity is regulated as follows. Feedback inhibited by histidine. Catalyzes the condensation of ATP and 5-phosphoribose 1-diphosphate to form N'-(5'-phosphoribosyl)-ATP (PR-ATP). Has a crucial role in the pathway because the rate of histidine biosynthesis seems to be controlled primarily by regulation of HisG enzymatic activity. The sequence is that of ATP phosphoribosyltransferase from Chlorobium phaeovibrioides (strain DSM 265 / 1930) (Prosthecochloris vibrioformis (strain DSM 265)).